Here is a 345-residue protein sequence, read N- to C-terminus: Holliday junction branch migration complex subunit RuvB (345 aa).

Residues 1-182 (MDQRIIASSS…FGIVQRLEFY (182 aa)) form a large ATPase domain (RuvB-L) region. ATP is bound by residues isoleucine 21, arginine 22, glycine 63, lysine 66, threonine 67, threonine 68, 129–131 (EDF), arginine 172, tyrosine 182, and arginine 219. Residue threonine 67 coordinates Mg(2+). Residues 183 to 253 (SPQELTRIVI…VAQAAMQMLK (71 aa)) form a small ATPAse domain (RuvB-S) region. Positions 256 to 345 (PEGFDELDRR…PGIGEPGDLF (90 aa)) are head domain (RuvB-H). Residues arginine 292, arginine 311, and arginine 316 each coordinate DNA.

Belongs to the RuvB family. In terms of assembly, homohexamer. Forms an RuvA(8)-RuvB(12)-Holliday junction (HJ) complex. HJ DNA is sandwiched between 2 RuvA tetramers; dsDNA enters through RuvA and exits via RuvB. An RuvB hexamer assembles on each DNA strand where it exits the tetramer. Each RuvB hexamer is contacted by two RuvA subunits (via domain III) on 2 adjacent RuvB subunits; this complex drives branch migration. In the full resolvosome a probable DNA-RuvA(4)-RuvB(12)-RuvC(2) complex forms which resolves the HJ.

It localises to the cytoplasm. It carries out the reaction ATP + H2O = ADP + phosphate + H(+). Functionally, the RuvA-RuvB-RuvC complex processes Holliday junction (HJ) DNA during genetic recombination and DNA repair, while the RuvA-RuvB complex plays an important role in the rescue of blocked DNA replication forks via replication fork reversal (RFR). RuvA specifically binds to HJ cruciform DNA, conferring on it an open structure. The RuvB hexamer acts as an ATP-dependent pump, pulling dsDNA into and through the RuvAB complex. RuvB forms 2 homohexamers on either side of HJ DNA bound by 1 or 2 RuvA tetramers; 4 subunits per hexamer contact DNA at a time. Coordinated motions by a converter formed by DNA-disengaged RuvB subunits stimulates ATP hydrolysis and nucleotide exchange. Immobilization of the converter enables RuvB to convert the ATP-contained energy into a lever motion, pulling 2 nucleotides of DNA out of the RuvA tetramer per ATP hydrolyzed, thus driving DNA branch migration. The RuvB motors rotate together with the DNA substrate, which together with the progressing nucleotide cycle form the mechanistic basis for DNA recombination by continuous HJ branch migration. Branch migration allows RuvC to scan DNA until it finds its consensus sequence, where it cleaves and resolves cruciform DNA. The polypeptide is Holliday junction branch migration complex subunit RuvB (Xanthomonas oryzae pv. oryzae (strain MAFF 311018)).